The following is a 178-amino-acid chain: Cytochrome b6-f complex iron-sulfur subunit (178 aa).

Residues 20-42 (LLTFGSVTGVALGALYPVANYFI) form a helical membrane-spanning segment. Residues 65–161 (ASGWLSSHPE…VSVENDNVFV (97 aa)) enclose the Rieske domain. 4 residues coordinate [2Fe-2S] cluster: C107, H109, C125, and H128. A disulfide bridge connects residues C112 and C127.

The protein belongs to the Rieske iron-sulfur protein family. As to quaternary structure, the 4 large subunits of the cytochrome b6-f complex are cytochrome b6, subunit IV (17 kDa polypeptide, PetD), cytochrome f and the Rieske protein, while the 4 small subunits are PetG, PetL, PetM and PetN. The complex functions as a dimer. It depends on [2Fe-2S] cluster as a cofactor.

The protein localises to the cellular thylakoid membrane. It carries out the reaction 2 oxidized [plastocyanin] + a plastoquinol + 2 H(+)(in) = 2 reduced [plastocyanin] + a plastoquinone + 4 H(+)(out). In terms of biological role, component of the cytochrome b6-f complex, which mediates electron transfer between photosystem II (PSII) and photosystem I (PSI), cyclic electron flow around PSI, and state transitions. In Synechococcus sp. (strain CC9605), this protein is Cytochrome b6-f complex iron-sulfur subunit.